The primary structure comprises 964 residues: Protein translocase subunit SecA (964 aa).

ATP is bound by residues Gln86, 104–108 (GEGKT), and Asp494. The disordered stretch occupies residues 848-964 (AESADTIAVA…YKMCHGQNEK (117 aa)). Residues 871–882 (AEGEVEEEDEDT) are compositionally biased toward acidic residues. Over residues 889–900 (AESAAASGAGES) the composition is skewed to low complexity. Positions 947, 949, 958, and 959 each coordinate Zn(2+).

Belongs to the SecA family. In terms of assembly, monomer and homodimer. Part of the essential Sec protein translocation apparatus which comprises SecA, SecYEG and auxiliary proteins SecDF. Other proteins may also be involved. It depends on Zn(2+) as a cofactor.

Its subcellular location is the cell membrane. It localises to the cytoplasm. It catalyses the reaction ATP + H2O + cellular proteinSide 1 = ADP + phosphate + cellular proteinSide 2.. In terms of biological role, part of the Sec protein translocase complex. Interacts with the SecYEG preprotein conducting channel. Has a central role in coupling the hydrolysis of ATP to the transfer of proteins into and across the cell membrane, serving as an ATP-driven molecular motor driving the stepwise translocation of polypeptide chains across the membrane. This is Protein translocase subunit SecA from Bifidobacterium longum (strain DJO10A).